The primary structure comprises 93 residues: Putative pterin-4-alpha-carbinolamine dehydratase (93 aa).

It belongs to the pterin-4-alpha-carbinolamine dehydratase family.

It catalyses the reaction (4aS,6R)-4a-hydroxy-L-erythro-5,6,7,8-tetrahydrobiopterin = (6R)-L-erythro-6,7-dihydrobiopterin + H2O. The protein is Putative pterin-4-alpha-carbinolamine dehydratase of Roseiflexus castenholzii (strain DSM 13941 / HLO8).